The primary structure comprises 168 residues: Endoribonuclease YbeY (168 aa).

Residues His-122, His-126, and His-132 each contribute to the Zn(2+) site.

The protein belongs to the endoribonuclease YbeY family. The cofactor is Zn(2+).

It localises to the cytoplasm. Functionally, single strand-specific metallo-endoribonuclease involved in late-stage 70S ribosome quality control and in maturation of the 3' terminus of the 16S rRNA. This chain is Endoribonuclease YbeY, found in Brucella abortus (strain 2308).